A 1178-amino-acid polypeptide reads, in one-letter code: Pyruvate carboxylase, mitochondrial (1178 aa).

Residues 1–20 (MLKFQTVRGGLRLLGVRRSS) constitute a mitochondrion transit peptide. N6-acetyllysine is present on residues K35 and K39. Residues 36–486 (PIKKVMVANR…DTQFIDENPE (451 aa)) form the Biotin carboxylation domain. K79 is subject to N6-acetyllysine; alternate. An N6-succinyllysine; alternate modification is found at K79. 2 positions are modified to N6-acetyllysine: K148 and K152. 2 residues coordinate ATP: K152 and E236. In terms of domain architecture, ATP-grasp spans 156-353 (RAIAIAAGVP…LVHAQIHVSE (198 aa)). K241 carries the post-translational modification N6-acetyllysine. Residue H271 participates in ATP binding. An N6-acetyllysine mark is found at K297, K316, and K319. R328 is a catalytic residue. The residue at position 434 (K434) is an N6-acetyllysine. An N6-succinyllysine modification is found at K442. Residues 563 to 832 (LLLMDTTFRD…DTEVPLERVF (270 aa)) form the Pyruvate carboxyltransferase domain. Substrate is bound at residue 571-575 (RDAHQ). D572 is a Mn(2+) binding site. K589 carries the post-translational modification N6-acetyllysine. Position 644 (R644) interacts with substrate. N6-acetyllysine occurs at positions 661 and 717. Position 741 (K741) interacts with Mn(2+). An N6-carboxylysine modification is found at K741. N6-acetyllysine is present on K748. Mn(2+)-binding residues include H771 and H773. An N6-acetyllysine modification is found at K892. A substrate-binding site is contributed by T908. An N6-acetyllysine modification is found at K969. K988 is modified (N6-acetyllysine; alternate). K988 is subject to N6-succinyllysine; alternate. K992 is modified (N6-acetyllysine). T1003 is subject to Phosphothreonine. N6-acetyllysine is present on residues K1061, K1090, and K1124. The Biotinyl-binding domain maps to 1109–1178 (KGQIGAPMPG…EGDDLILEIE (70 aa)). At K1144 the chain carries N6-biotinyllysine.

As to quaternary structure, homotetramer. Interacts (via the biotin carboxylation domain) with SIRT4. Requires biotin as cofactor. It depends on Mn(2+) as a cofactor. In terms of processing, acetylation of Lys-748 might play a role in catalytic activity regulation.

It is found in the mitochondrion matrix. It carries out the reaction hydrogencarbonate + pyruvate + ATP = oxaloacetate + ADP + phosphate + H(+). It functions in the pathway carbohydrate biosynthesis; gluconeogenesis. Its function is as follows. Pyruvate carboxylase catalyzes a 2-step reaction, involving the ATP-dependent carboxylation of the covalently attached biotin in the first step and the transfer of the carboxyl group to pyruvate in the second. Catalyzes in a tissue specific manner, the initial reactions of glucose (liver, kidney) and lipid (adipose tissue, liver, brain) synthesis from pyruvate. In Rattus norvegicus (Rat), this protein is Pyruvate carboxylase, mitochondrial (Pc).